The following is an 848-amino-acid chain: Beta-galactosidase 13 (848 aa).

Residues 1–27 form the signal peptide; the sequence is MKIHSSDHSWLLLAVLVILLSFSGALS. Residue asparagine 107 is glycosylated (N-linked (GlcNAc...) asparagine). Catalysis depends on glutamate 200, which acts as the Proton donor. The active-site Nucleophile is the glutamate 271. Residues asparagine 272, asparagine 303, asparagine 376, asparagine 398, asparagine 782, asparagine 787, and asparagine 817 are each glycosylated (N-linked (GlcNAc...) asparagine). One can recognise an SUEL-type lectin domain in the interval 754-843; that stretch reads DDVHLTANLK…KKLAVQVKCG (90 aa).

Belongs to the glycosyl hydrolase 35 family. In terms of tissue distribution, ubiquitous, with higher expression levels in roots, flowers and siliques.

The protein resides in the secreted. Its subcellular location is the extracellular space. It localises to the apoplast. It carries out the reaction Hydrolysis of terminal non-reducing beta-D-galactose residues in beta-D-galactosides.. In Arabidopsis thaliana (Mouse-ear cress), this protein is Beta-galactosidase 13 (BGAL13).